Reading from the N-terminus, the 117-residue chain is Large ribosomal subunit protein uL22 (117 aa).

The protein belongs to the universal ribosomal protein uL22 family. Part of the 50S ribosomal subunit.

Its function is as follows. This protein binds specifically to 23S rRNA; its binding is stimulated by other ribosomal proteins, e.g. L4, L17, and L20. It is important during the early stages of 50S assembly. It makes multiple contacts with different domains of the 23S rRNA in the assembled 50S subunit and ribosome. Functionally, the globular domain of the protein is located near the polypeptide exit tunnel on the outside of the subunit, while an extended beta-hairpin is found that lines the wall of the exit tunnel in the center of the 70S ribosome. In Lacticaseibacillus casei (strain BL23) (Lactobacillus casei), this protein is Large ribosomal subunit protein uL22.